The sequence spans 92 residues: DNA-directed RNA polymerase subunit Rpo11 (92 aa).

The protein belongs to the archaeal Rpo11/eukaryotic RPB11/RPC19 RNA polymerase subunit family. As to quaternary structure, part of the 13-subunit RNA polymerase complex.

The protein localises to the cytoplasm. It carries out the reaction RNA(n) + a ribonucleoside 5'-triphosphate = RNA(n+1) + diphosphate. In terms of biological role, DNA-dependent RNA polymerase (RNAP) catalyzes the transcription of DNA into RNA using the four ribonucleoside triphosphates as substrates. The polypeptide is DNA-directed RNA polymerase subunit Rpo11 (Saccharolobus solfataricus (strain ATCC 35092 / DSM 1617 / JCM 11322 / P2) (Sulfolobus solfataricus)).